A 141-amino-acid chain; its full sequence is Large ribosomal subunit protein uL13 (141 aa).

Belongs to the universal ribosomal protein uL13 family. In terms of assembly, part of the 50S ribosomal subunit.

In terms of biological role, this protein is one of the early assembly proteins of the 50S ribosomal subunit, although it is not seen to bind rRNA by itself. It is important during the early stages of 50S assembly. The chain is Large ribosomal subunit protein uL13 from Helicobacter acinonychis (strain Sheeba).